Reading from the N-terminus, the 337-residue chain is Probable arabinose 5-phosphate isomerase (337 aa).

The SIS domain maps to 58-201; it reads VIDLILACEG…AVSLITARNF (144 aa). Residues 92–93, His-99, His-105, 131–140, 165–167, Thr-237, and Asp-290 contribute to the substrate site; these read GT, KLIPSLKNFG, and TVE. His-99 is a Zn(2+) binding site. In terms of domain architecture, CBS 1 spans 227 to 284; sequence MQTRLPTILPTTNFTDCLTVMNEGRMGVALVMENEQLKGIITDGDIRRALTANGAGTL. A CBS 2 domain is found at 292-337; the sequence is MTSSPKTIHQDEFLSKAEDFMKAKKIHSLVVVNDENHVVGLVEFSS.

It belongs to the SIS family. GutQ/KpsF subfamily.

It catalyses the reaction D-arabinose 5-phosphate = D-ribulose 5-phosphate. Catalyzes the reversible aldol-ketol isomerization between D-ribulose 5-phosphate (Ru5P) and D-arabinose 5-phosphate (A5P). This is Probable arabinose 5-phosphate isomerase from Haemophilus influenzae (strain ATCC 51907 / DSM 11121 / KW20 / Rd).